A 163-amino-acid chain; its full sequence is uncharacterized protein (163 aa).

The disordered stretch occupies residues 144-163 (WSHSQSQLGTPGRGKGALGF). Residues 154-163 (PGRGKGALGF) show a composition bias toward gly residues.

This is an uncharacterized protein from Homo sapiens (Human).